The chain runs to 340 residues: Homeobox protein DBX2 (340 aa).

Residues 185–244 (GILRRAVFSEDQRKALEKMFQKQKYISKTDRKKLAINLGLKESQVKIWFQNRRMKWRNSK) constitute a DNA-binding region (homeobox). The segment at 283–313 (QQHPSPGWRENSPEPSERLIQGSPGAEALPP) is disordered.

The protein belongs to the H2.0 homeobox family.

The protein resides in the nucleus. The chain is Homeobox protein DBX2 (DBX2) from Bos taurus (Bovine).